The following is a 143-amino-acid chain: MSFLFFLVVLISIGLWVGPCVADNPENRCIKQFAKTNPACIVHCKYNLYKFTDDNYDITDQHINKFTDVLIKNKAVDGSKKSQVQEHLKKCAEESLKKTHGKNCQRLVEYYSCAVDNKLIDYFKYESAINSYDRSIYTPPYSG.

Residues 1–22 (MSFLFFLVVLISIGLWVGPCVA) form the signal peptide.

Interacts with human F12 (inactive). Salivary gland.

The protein resides in the secreted. Functionally, inhibits the intrinsic blood coagulation pathway in the host by blocking activation of host coagulation factor XII (F12). This chain is Ayaconin, found in Lutzomyia ayacuchensis (Sand fly).